A 505-amino-acid chain; its full sequence is ATP synthase subunit alpha, chloroplastic (505 aa).

170 to 177 (GDRQTGKT) serves as a coordination point for ATP.

It belongs to the ATPase alpha/beta chains family. F-type ATPases have 2 components, CF(1) - the catalytic core - and CF(0) - the membrane proton channel. CF(1) has five subunits: alpha(3), beta(3), gamma(1), delta(1), epsilon(1). CF(0) has four main subunits: a, b, b' and c.

The protein localises to the plastid. Its subcellular location is the chloroplast thylakoid membrane. It catalyses the reaction ATP + H2O + 4 H(+)(in) = ADP + phosphate + 5 H(+)(out). Its function is as follows. Produces ATP from ADP in the presence of a proton gradient across the membrane. The alpha chain is a regulatory subunit. This Oenothera elata subsp. hookeri (Hooker's evening primrose) protein is ATP synthase subunit alpha, chloroplastic.